The chain runs to 92 residues: Protein S100-B (92 aa).

Serine 2 bears the N-acetylserine mark. EF-hand domains lie at 13-48 (DVFH…LEEI) and 49-84 (KEQE…VTTA). Histidine 16 is a Zn(2+) binding site. 3 residues coordinate Ca(2+): serine 19, glutamate 22, and aspartate 24. Residue histidine 26 coordinates Zn(2+). Positions 62, 64, 66, 68, and 73 each coordinate Ca(2+). The Zn(2+) site is built by histidine 86 and histidine 91.

Belongs to the S-100 family. As to quaternary structure, dimer of either two alpha chains, or two beta chains, or one alpha and one beta chain. The S100B dimer binds two molecules of STK38. Interacts with CACYBP in a calcium-dependent manner. Interacts with ATAD3A; this interaction probably occurs in the cytosol prior to ATAD3A mitochondrial targeting. Interacts with S100A6. The S100B dimer interacts with two molecules of CAPZA1. Interacts with AGER. Interacts with PPP5C (via TPR repeats); the interaction is calcium-dependent and modulates PPP5C activity. Interacts with TPPP; this interaction inhibits TPPP dimerization. Interacts with isoform CLSTN3beta of CLSTN3; interaction promotes secretion.

It is found in the cytoplasm. It localises to the nucleus. The protein localises to the secreted. In terms of biological role, small zinc- and- and calcium-binding protein that is highly expressed in astrocytes and constitutes one of the most abundant soluble proteins in brain. Weakly binds calcium but binds zinc very tightly-distinct binding sites with different affinities exist for both ions on each monomer. Physiological concentrations of potassium ion antagonize the binding of both divalent cations, especially affecting high-affinity calcium-binding sites. Acts as a neurotrophic factor that promotes astrocytosis and axonal proliferation. Involved in innervation of thermogenic adipose tissue by acting as an adipocyte-derived neurotrophic factor that promotes sympathetic innervation of adipose tissue. Binds to and initiates the activation of STK38 by releasing autoinhibitory intramolecular interactions within the kinase. Interaction with AGER after myocardial infarction may play a role in myocyte apoptosis by activating ERK1/2 and p53/TP53 signaling. Could assist ATAD3A cytoplasmic processing, preventing aggregation and favoring mitochondrial localization. May mediate calcium-dependent regulation on many physiological processes by interacting with other proteins, such as TPR-containing proteins, and modulating their activity. In Mus musculus (Mouse), this protein is Protein S100-B.